Consider the following 1425-residue polypeptide: Ferlin 1 (1425 aa).

3 C2 domains span residues 1–123, 161–281, and 506–629; these read MAAK…RQWV, VNEG…PRWF, and TKAG…PVWL. The disordered stretch occupies residues 871–952; sequence RPQASRLSRE…ALAASPEEET (82 aa). Basic and acidic residues-rich tracts occupy residues 877 to 889 and 912 to 926; these read LSRE…ERGK and ETEK…KKEG. C2 domains follow at residues 1032–1160 and 1192–1319; these read EMDA…EQMV and RADY…QQHY. A helical transmembrane segment spans residues 1404–1424; the sequence is TGVWMTVAGIIALVIFVMFLL.

This sequence belongs to the ferlin family.

The protein resides in the golgi apparatus. It localises to the trans-Golgi network membrane. The protein localises to the endosome membrane. Its subcellular location is the cytoplasm. Functionally, plays a role in microneme replenishment, probably at the vesicular trafficking level. Directs microneme organelle traffic differentially based on microneme population. Regulates microneme secretion: facilitates microneme membrane fusion with the plasma membrane. The chain is Ferlin 1 from Toxoplasma gondii.